The sequence spans 380 residues: GATOR1 complex protein NPRL2 (380 aa).

An interaction with PDPK1 region spans residues 1-133; the sequence is MGSSCRIECI…SKQKLVPIMT (133 aa). Arg78 provides a ligand contact to GDP. At Arg78 the chain carries Asymmetric dimethylarginine. Glycyl lysine isopeptide (Lys-Gly) (interchain with G-Cter in ubiquitin) cross-links involve residues Lys158 and Lys357.

The protein belongs to the NPR2 family. As to quaternary structure, within the GATOR complex, component of the GATOR1 subcomplex, made of DEPDC5, NPRL2 and NPRL3. GATOR1 mediates the strong interaction of the GATOR complex with small GTPases Rag (RagA/RRAGA, RagB/RRAGB, RagC/RRAGC and/or RagD/RRAGD) heterodimers. GATOR1 interacts with GPR155/LYCHOS; interaction takes place in presence of cholesterol and prevents interaction between GATOR1 and KICSTOR. Interacts with PDPK1. In the presence of abundant amino acids, ubiquitinated at Lys-158 and Lys-357 via 'Lys-6'-linked ubiquitination by the WDR24 component of the GATOR2 complex, thereby inhibiting the GATOR1 complex and promoting mTORC1 activation. Post-translationally, asymmetric dimethylation at Arg-78 by PRMT1 inhibits the GTPase activator activity of the GATOR1 complex and consequently inducing timely mTORC1 activation under methionine-sufficient conditions.

It is found in the lysosome membrane. Functionally, catalytic component of the GATOR1 complex, a multiprotein complex that functions as an inhibitor of the amino acid-sensing branch of the mTORC1 pathway. In response to amino acid depletion, the GATOR1 complex has GTPase activating protein (GAP) activity and strongly increases GTP hydrolysis by RagA/RRAGA (or RagB/RRAGB) within heterodimeric Rag complexes, thereby turning them into their inactive GDP-bound form, releasing mTORC1 from lysosomal surface and inhibiting mTORC1 signaling. In the presence of abundant amino acids, the GATOR1 complex is ubiquitinated and inhibited by GATOR2. Within the GATOR1 complex, NPRL2 constitutes the catalytic subunit that mediates the GTPase activator activity and under methionine-sufficient conditions, the GTPase activator activity is inhibited by PRMT1 through methylation and consequently inducing timely mTORC1 activation. Suppresses Src-dependent tyrosine phosphorylation and activation of PDPK1 and its downstream signaling. Down-regulates PDPK1 kinase activity by interfering with tyrosine phosphorylation at 'Tyr-9', 'Tyr-373' and 'Tyr-376' residues. May act as a tumor suppressor. Suppresses cell growth and enhances sensitivity to various anticancer drugs. In Mus musculus (Mouse), this protein is GATOR1 complex protein NPRL2.